Consider the following 283-residue polypeptide: Pantothenate synthetase (283 aa).

30–37 (MGYLHEGH) contributes to the ATP binding site. His37 functions as the Proton donor in the catalytic mechanism. Gln61 contacts (R)-pantoate. Gln61 serves as a coordination point for beta-alanine. 147 to 150 (GQKD) contacts ATP. Gln153 is a (R)-pantoate binding site. ATP contacts are provided by residues Val176 and 184-187 (MSSR).

Belongs to the pantothenate synthetase family. Homodimer.

Its subcellular location is the cytoplasm. It catalyses the reaction (R)-pantoate + beta-alanine + ATP = (R)-pantothenate + AMP + diphosphate + H(+). It participates in cofactor biosynthesis; (R)-pantothenate biosynthesis; (R)-pantothenate from (R)-pantoate and beta-alanine: step 1/1. Catalyzes the condensation of pantoate with beta-alanine in an ATP-dependent reaction via a pantoyl-adenylate intermediate. The polypeptide is Pantothenate synthetase (Thermoanaerobacter pseudethanolicus (strain ATCC 33223 / 39E) (Clostridium thermohydrosulfuricum)).